Reading from the N-terminus, the 213-residue chain is MKAYQRQFIEFALEKGVLKFGEFTLKSGRVSPYFFNAGLFNTGRDLARLGRFYAEALVDAGIDYDVLFGPAYKGIPIATTTAVALADHHDIDMPYCFNRKEVKTHGEGGSLVGSDLEGRIMLVDDVITAGTAIRESMEIIKANGADLAGVLVAIDRQEKGKGELSAIQEVERDFGCAVISIVSLGDVVTYLSEQDGMDAHLAAVKSYRAEYGV.

A 5-phospho-alpha-D-ribose 1-diphosphate-binding site is contributed by K26. 34–35 (FF) contributes to the orotate binding site. 5-phospho-alpha-D-ribose 1-diphosphate contacts are provided by residues 72 to 73 (YK), R99, K100, K103, H105, and 124 to 132 (DDVITAGTA). Positions 128 and 156 each coordinate orotate.

The protein belongs to the purine/pyrimidine phosphoribosyltransferase family. PyrE subfamily. In terms of assembly, homodimer. The cofactor is Mg(2+).

It carries out the reaction orotidine 5'-phosphate + diphosphate = orotate + 5-phospho-alpha-D-ribose 1-diphosphate. Its pathway is pyrimidine metabolism; UMP biosynthesis via de novo pathway; UMP from orotate: step 1/2. Catalyzes the transfer of a ribosyl phosphate group from 5-phosphoribose 1-diphosphate to orotate, leading to the formation of orotidine monophosphate (OMP). The polypeptide is Orotate phosphoribosyltransferase (Photobacterium profundum (strain SS9)).